The primary structure comprises 412 residues: Peptidase T (412 aa).

A Zn(2+)-binding site is contributed by His-84. The active site involves Asp-86. Asp-146 contributes to the Zn(2+) binding site. The active-site Proton acceptor is the Glu-179. Residues Glu-180, Asp-202, and His-385 each contribute to the Zn(2+) site.

This sequence belongs to the peptidase M20B family. Zn(2+) serves as cofactor.

It is found in the cytoplasm. The catalysed reaction is Release of the N-terminal residue from a tripeptide.. In terms of biological role, cleaves the N-terminal amino acid of tripeptides. This is Peptidase T from Pasteurella multocida (strain Pm70).